The following is a 219-amino-acid chain: GTP-binding protein Rit1 (219 aa).

Residues 28–35 (GAGGVGKS), 75–79 (DTAGQ), and 134–137 (NKSD) contribute to the GTP site.

Belongs to the small GTPase superfamily. Ras family. Interacts with AFDN, the C-terminal domain of RALGDS and RLF, but not with RIN1 and PIK3CA. RLF binds exclusively to the active GTP-bound form. Strongly interacts with BRAF, but only weakly with RAF1. BARF and RAF1 association is dependent upon the GTP-bound state. Interacts with RGL3. In terms of tissue distribution, expressed in many tissues.

The protein localises to the cell membrane. The catalysed reaction is GTP + H2O = GDP + phosphate + H(+). Alternates between an inactive form bound to GDP and an active form bound to GTP. Plays a crucial role in coupling NGF stimulation to the activation of both EPHB2 and MAPK14 signaling pathways and in NGF-dependent neuronal differentiation. Involved in ELK1 transactivation through the Ras-MAPK signaling cascade that mediates a wide variety of cellular functions, including cell proliferation, survival, and differentiation. In Mus musculus (Mouse), this protein is GTP-binding protein Rit1 (Rit1).